A 189-amino-acid chain; its full sequence is Protein GrpE (189 aa).

The segment at 1–37 is disordered; it reads MSDSSKEKKKKFADMVSRQKGDDQQSDNHKQTDDLNE. Residues 17–33 are compositionally biased toward basic and acidic residues; the sequence is SRQKGDDQQSDNHKQTD.

This sequence belongs to the GrpE family. In terms of assembly, homodimer.

It is found in the cytoplasm. Participates actively in the response to hyperosmotic and heat shock by preventing the aggregation of stress-denatured proteins, in association with DnaK and GrpE. It is the nucleotide exchange factor for DnaK and may function as a thermosensor. Unfolded proteins bind initially to DnaJ; upon interaction with the DnaJ-bound protein, DnaK hydrolyzes its bound ATP, resulting in the formation of a stable complex. GrpE releases ADP from DnaK; ATP binding to DnaK triggers the release of the substrate protein, thus completing the reaction cycle. Several rounds of ATP-dependent interactions between DnaJ, DnaK and GrpE are required for fully efficient folding. The protein is Protein GrpE of Wolbachia pipientis wMel.